A 102-amino-acid chain; its full sequence is Defensin-like protein 285 (102 aa).

An N-terminal signal peptide occupies residues Met-1 to Ala-28. 4 cysteine pairs are disulfide-bonded: Cys-39-Cys-100, Cys-64-Cys-83, Cys-70-Cys-88, and Cys-75-Cys-90.

It belongs to the DEFL family.

The protein resides in the secreted. The chain is Defensin-like protein 285 from Arabidopsis thaliana (Mouse-ear cress).